Reading from the N-terminus, the 219-residue chain is Occludin/ELL domain-containing protein 1 (219 aa).

Residues Met-1 to Thr-110 are disordered. A compositionally biased stretch (low complexity) spans Leu-17–Arg-43. Over residues Val-72–Gly-93 the composition is skewed to basic and acidic residues. The OCEL domain maps to Pro-100 to Asp-210.

This sequence belongs to the ELL/occludin family.

The polypeptide is Occludin/ELL domain-containing protein 1 (Ocel1) (Mus musculus (Mouse)).